A 100-amino-acid chain; its full sequence is Urease subunit gamma (100 aa).

Belongs to the urease gamma subunit family. In terms of assembly, heterotrimer of UreA (gamma), UreB (beta) and UreC (alpha) subunits. Three heterotrimers associate to form the active enzyme.

It is found in the cytoplasm. It carries out the reaction urea + 2 H2O + H(+) = hydrogencarbonate + 2 NH4(+). It functions in the pathway nitrogen metabolism; urea degradation; CO(2) and NH(3) from urea (urease route): step 1/1. This Enterobacter sp. (strain 638) protein is Urease subunit gamma.